The chain runs to 151 residues: Putative pre-16S rRNA nuclease (151 aa).

Belongs to the YqgF nuclease family.

It is found in the cytoplasm. Functionally, could be a nuclease involved in processing of the 5'-end of pre-16S rRNA. This Onion yellows phytoplasma (strain OY-M) protein is Putative pre-16S rRNA nuclease.